We begin with the raw amino-acid sequence, 1477 residues long: Putative insulin-like peptide receptor (1477 aa).

An N-terminal signal peptide occupies residues 1 to 24 (MMRNVQSFYFLFLLIVLNFHVVLS). Over 25 to 980 (AVCIGQRATT…LSVTKNNNQL (956 aa)) the chain is Extracellular. N-linked (GlcNAc...) asparagine glycans are attached at residues asparagine 55, asparagine 255, asparagine 300, asparagine 325, asparagine 457, asparagine 491, asparagine 549, asparagine 644, asparagine 732, asparagine 791, asparagine 874, asparagine 895, and asparagine 957. 2 Fibronectin type-III domains span residues 652–750 (EPLG…IKAD) and 780–869 (NKSP…IVQA). In terms of domain architecture, Fibronectin type-III 3 spans 880–971 (LDSKMVRVQV…EEIHFKVAEL (92 aa)). Residues 981–1001 (IIGIISAVSAVIVALLVFILL) form a helical membrane-spanning segment. Topologically, residues 1002 to 1477 (YMFLHRKLEK…EIFYGKPIPV (476 aa)) are cytoplasmic. The Protein kinase domain occupies 1044-1315 (IELIRELGQG…LENEVDDDFV (272 aa)). Residues 1050–1058 (LGQGSFGMV) and lysine 1077 contribute to the ATP site. Aspartate 1175 acts as the Proton acceptor in catalysis. At tyrosine 1201 the chain carries Phosphotyrosine; by autocatalysis. 2 disordered regions span residues 1350–1376 (YTKG…KSKE) and 1391–1421 (KYDA…SNAC). The segment covering 1356 to 1368 (NMQNMLSRSQNRK) has biased composition (polar residues). Residues 1403 to 1412 (KKKKRPRSKR) show a composition bias toward basic residues.

Belongs to the protein kinase superfamily. Tyr protein kinase family. Insulin receptor subfamily. Mn(2+) is required as a cofactor. As to expression, expressed in dividing epithelial cells.

The protein localises to the membrane. The enzyme catalyses L-tyrosyl-[protein] + ATP = O-phospho-L-tyrosyl-[protein] + ADP + H(+). In terms of biological role, this receptor probably binds an insulin related protein and has a tyrosine-protein kinase activity. The protein is Putative insulin-like peptide receptor (HTK7) of Hydra vulgaris (Hydra).